We begin with the raw amino-acid sequence, 730 residues long: Pentatricopeptide repeat-containing protein At5g64320, mitochondrial (730 aa).

The transit peptide at 1 to 18 (MVMLARSKLALDVSRRSQ) directs the protein to the mitochondrion. PPR repeat units lie at residues 110 to 144 (SFDV…GIVF), 145 to 175 (KESL…MRNV), 181 to 215 (TFKS…KIPP), 216 to 250 (TLFT…GCVP), 251 to 285 (NSVI…GCVP), 286 to 320 (DAET…GFAP), 321 to 351 (DDIT…IPKP), 352 to 387 (EIVI…GIVP), 388 to 422 (DVCT…GCKP), 423 to 457 (NVYS…GLKP), 458 to 492 (NTVG…GCKP), 493 to 527 (DVYT…GVVA), 528 to 562 (NTVT…GSPL), 563 to 597 (DEIT…GHAP), 598 to 632 (SNIS…GSTP), 633 to 667 (DIVT…GIPP), and 668 to 702 (DTVT…GFVP).

This sequence belongs to the PPR family. P subfamily.

Its subcellular location is the mitochondrion. The protein is Pentatricopeptide repeat-containing protein At5g64320, mitochondrial of Arabidopsis thaliana (Mouse-ear cress).